The primary structure comprises 342 residues: 4-hydroxy-2-oxovalerate aldolase (342 aa).

A Pyruvate carboxyltransferase domain is found at 7 to 259 (ILVHDMSLRD…CTGVDLGRIQ (253 aa)). Position 15–16 (15–16 (RD)) interacts with substrate. Residue D16 coordinates Mn(2+). H19 (proton acceptor) is an active-site residue. S169 and H198 together coordinate substrate. Mn(2+) is bound by residues H198 and H200. Y289 is a binding site for substrate.

This sequence belongs to the 4-hydroxy-2-oxovalerate aldolase family.

It carries out the reaction (S)-4-hydroxy-2-oxopentanoate = acetaldehyde + pyruvate. The chain is 4-hydroxy-2-oxovalerate aldolase from Alkalilimnicola ehrlichii (strain ATCC BAA-1101 / DSM 17681 / MLHE-1).